The following is an 874-amino-acid chain: DNA mismatch repair protein MutS (874 aa).

630–637 (GPNMAGKS) contacts ATP.

The protein belongs to the DNA mismatch repair MutS family.

In terms of biological role, this protein is involved in the repair of mismatches in DNA. It is possible that it carries out the mismatch recognition step. This protein has a weak ATPase activity. This is DNA mismatch repair protein MutS from Chlorobium phaeovibrioides (strain DSM 265 / 1930) (Prosthecochloris vibrioformis (strain DSM 265)).